The chain runs to 1367 residues: Paired amphipathic helix protein Sin3-like 2 (1367 aa).

A disordered region spans residues glutamine 14–asparagine 44. Over residues threonine 33 to glycine 42 the composition is skewed to gly residues. 2 consecutive PAH domains span residues glutamine 46 to glycine 116 and lysine 130 to serine 200. Positions serine 212–serine 322 are disordered. 2 stretches are compositionally biased toward basic and acidic residues: residues methionine 230–leucine 286 and phenylalanine 299–glycine 311. In terms of domain architecture, PAH 3 spans leucine 327 to cysteine 396. 4 disordered regions span residues glutamate 417–serine 446, aspartate 786–proline 883, glutamine 912–aspartate 946, and alanine 958–glutamate 1031. Composition is skewed to basic and acidic residues over residues valine 424 to serine 446 and serine 806 to asparagine 819. Polar residues-rich tracts occupy residues alanine 851–serine 876 and glutamine 912–aspartate 923. Basic and acidic residues predominate over residues alanine 958–glutamate 967. Composition is skewed to acidic residues over residues alanine 968 to glutamate 989 and isoleucine 997 to glutamate 1016. Phosphoserine is present on serine 1023.

Its subcellular location is the nucleus. Acts as a transcriptional repressor. Plays roles in regulating gene expression and genome stability. This is Paired amphipathic helix protein Sin3-like 2 (SNL2) from Arabidopsis thaliana (Mouse-ear cress).